The chain runs to 1040 residues: Multidrug resistance protein MdtB (1040 aa).

A run of 12 helical transmembrane segments spans residues 16–36 (FIMR…AGII), 347–367 (LMMA…NIPA), 369–389 (IIPG…MVFL), 396–416 (LTLM…IVVI), 440–460 (IGFT…PLLF), 472–492 (FAIT…TLTP), 537–557 (WLTL…WVFI), 863–883 (LGST…VLGI), 888–908 (FIHP…ALLA), 911–931 (IAGS…IGIV), 968–988 (ILMT…STGV), and 998–1018 (IGMV…TPVI).

The protein belongs to the resistance-nodulation-cell division (RND) (TC 2.A.6) family. MdtB subfamily. As to quaternary structure, part of a tripartite efflux system composed of MdtA, MdtB and MdtC. MdtB forms a heteromultimer with MdtC.

It localises to the cell inner membrane. The MdtABC tripartite complex confers resistance against novobiocin and deoxycholate. The polypeptide is Multidrug resistance protein MdtB (Escherichia coli O81 (strain ED1a)).